The chain runs to 114 residues: Fluoride-specific ion channel FluC 1 (114 aa).

4 consecutive transmembrane segments (helical) span residues 3 to 23, 30 to 50, 55 to 75, and 87 to 107; these read IDIK…GALF, IFIV…LNIL, LTLC…MSHL, and FLLN…LGHI. The Na(+) site is built by G63 and T66.

Belongs to the fluoride channel Fluc/FEX (TC 1.A.43) family.

The protein localises to the cell inner membrane. The catalysed reaction is fluoride(in) = fluoride(out). Its activity is regulated as follows. Na(+) is not transported, but it plays an essential structural role and its presence is essential for fluoride channel function. Functionally, fluoride-specific ion channel. Important for reducing fluoride concentration in the cell, thus reducing its toxicity. The protein is Fluoride-specific ion channel FluC 1 of Prochlorococcus marinus (strain NATL2A).